Reading from the N-terminus, the 546-residue chain is Probable protein kinase UbiB (546 aa).

One can recognise a Protein kinase domain in the interval 124–502; sequence DFEIKPLASA…HVRQGQSRYF (379 aa). ATP-binding positions include 130–138 and Lys-153; that span reads LASASIAQV. The active-site Proton acceptor is Asp-288. The next 2 helical transmembrane spans lie at 501–521 and 522–542; these read YFLG…VSRP and EWGL…FVGW.

It belongs to the ABC1 family. UbiB subfamily.

The protein localises to the cell inner membrane. It functions in the pathway cofactor biosynthesis; ubiquinone biosynthesis [regulation]. Is probably a protein kinase regulator of UbiI activity which is involved in aerobic coenzyme Q (ubiquinone) biosynthesis. The protein is Probable protein kinase UbiB of Escherichia coli O127:H6 (strain E2348/69 / EPEC).